We begin with the raw amino-acid sequence, 348 residues long: D-alanine--D-alanine ligase (348 aa).

One can recognise an ATP-grasp domain in the interval 132-334 (KRVLESIGIP…YPDLIEELVT (203 aa)). 162-217 (LARLTFPIFVKPANMGSSVGISKAQTKVELRKAIQLALTYDSRVLIEQGVIAREIE) is a binding site for ATP. Asp-288, Glu-301, and Asn-303 together coordinate Mg(2+).

It belongs to the D-alanine--D-alanine ligase family. Requires Mg(2+) as cofactor. Mn(2+) serves as cofactor.

The protein localises to the cytoplasm. It carries out the reaction 2 D-alanine + ATP = D-alanyl-D-alanine + ADP + phosphate + H(+). The protein operates within cell wall biogenesis; peptidoglycan biosynthesis. Cell wall formation. The sequence is that of D-alanine--D-alanine ligase from Streptococcus pyogenes serotype M4 (strain MGAS10750).